The primary structure comprises 206 residues: Sperm acrosome developmental regulator (206 aa).

The tract at residues 180–206 is disordered; it reads RRHHVRCHAAPRPNPAQSLKLDAQSPL.

In terms of tissue distribution, expressed in sperm (at protein level).

It localises to the cytoplasmic vesicle. Its subcellular location is the secretory vesicle. It is found in the acrosome. In terms of biological role, may play a role in acrosome formation and nucleus shaping during spermiogenesis. In Homo sapiens (Human), this protein is Sperm acrosome developmental regulator.